A 219-amino-acid chain; its full sequence is Arginine transport system permease protein ArtQ (219 aa).

A run of 5 helical transmembrane segments spans residues 19–39 (LAIT…LGIV), 51–73 (FIWI…QLMI), 88–108 (QFWA…SEII), 149–169 (AIVN…VIGL), and 187–207 (LEPL…LTFI). An ABC transmembrane type-1 domain is found at 19 to 208 (LAITLKIVVV…VLVLILTFIG (190 aa)).

The protein belongs to the binding-protein-dependent transport system permease family. HisMQ subfamily.

It localises to the cell membrane. Its function is as follows. Part of a binding-protein-dependent transport system for arginine. Probably responsible for the translocation of the substrate across the membrane. This is Arginine transport system permease protein ArtQ (artQ) from Bacillus subtilis (strain 168).